A 942-amino-acid polypeptide reads, in one-letter code: Calcium-activated chloride channel regulator 2 (942 aa).

The N-terminal stretch at 1–32 is a signal peptide; it reads MTHRDSTGPVIGLKLVTLLFTLSPELLFLGAG. The Extracellular segment spans residues 33 to 905; it reads LKLKENGYDG…SRDDLILKGV (873 aa). The metalloprotease domain stretch occupies residues 54 to 205; it reads DLKLITNIKE…CSSDITGVFV (152 aa). Asparagine 74 and asparagine 97 each carry an N-linked (GlcNAc...) asparagine glycan. Histidine 164 contacts Zn(2+). Glutamate 165 is a catalytic residue. Zn(2+)-binding residues include histidine 168 and aspartate 175. N-linked (GlcNAc...) asparagine glycosylation is found at asparagine 231, asparagine 235, asparagine 254, and asparagine 286. The region spanning 311 to 483 is the VWFA domain; sequence VVCLVIDVSR…NGMTEAFVRI (173 aa). N-linked (GlcNAc...) asparagine glycosylation is found at asparagine 522, asparagine 580, asparagine 637, and asparagine 821. Residues 906–926 form a helical membrane-spanning segment; that stretch reads LTTVGLIAILCLIMVVAHCIF. Topologically, residues 927-942 are cytoplasmic; sequence NRKKRPSRKENETKFL.

The protein belongs to the CLCR family. The translation product is autoproteolytically cleaved by the metalloprotease domain in the endoplasmic reticulum into a N-terminal and a C-terminal products that remain physically associated with each other. The cleavage is necessary for calcium-activated chloride channel (CaCC) activation activity. Post-translationally, N-glycosylated. Highly expressed in eye, spleen, lung, kidney, uterus, and endothelial cells. Weakly expressed in heart and throughout the gastrointestinal tract. Highly expressed in mammary cell lines. Its expression in immortalized cell line HC11 correlates with slow or arrested growth. Re-expression in mammary tumor cells reduces colony survival.

The protein localises to the cell membrane. The protein resides in the basal cell membrane. It localises to the cell junction. Its function is as follows. Plays a role in modulating chloride current across the plasma membrane in a calcium-dependent manner, and cell adhesion. Involved in basal cell adhesion and/or stratification of squamous epithelia. May act as a tumor suppressor in breast and colorectal cancer. Plays a key role for cell adhesion in the beginning stages of lung metastasis via the binding to ITGB4. This Mus musculus (Mouse) protein is Calcium-activated chloride channel regulator 2 (Clca2).